The chain runs to 331 residues: Vitamin B12 import system permease protein BtuC (331 aa).

The next 9 helical transmembrane spans lie at 20-42, 62-84, 91-113, 118-140, 147-169, 189-208, 240-262, 277-299, and 306-325; these read IMSV…FLSP, LVAA…VLLG, GVLG…LPVL, IFML…IARA, RLLL…AFYF, ASWY…VWLC, LAIS…VGLV, YLLP…GARL, and LPLG…WMLV.

This sequence belongs to the binding-protein-dependent transport system permease family. FecCD subfamily. As to quaternary structure, the complex is composed of two ATP-binding proteins (BtuD), two transmembrane proteins (BtuC) and a solute-binding protein (BtuF).

The protein resides in the cell inner membrane. Functionally, part of the ABC transporter complex BtuCDF involved in vitamin B12 import. Involved in the translocation of the substrate across the membrane. The chain is Vitamin B12 import system permease protein BtuC from Vibrio parahaemolyticus serotype O3:K6 (strain RIMD 2210633).